The primary structure comprises 215 residues: HTH-type transcriptional repressor FabR (215 aa).

Residues 10–70 (KTRRSLVEAA…TMVDESGLML (61 aa)) form the HTH tetR-type domain. Positions 33–52 (SLREVAREAVIAPTSFYRHF) form a DNA-binding region, H-T-H motif.

In terms of assembly, homodimer.

It localises to the cytoplasm. In terms of biological role, represses the transcription of fabB, involved in unsaturated fatty acid (UFA) biosynthesis. By controlling UFA production, FabR directly influences the physical properties of the membrane bilayer. The polypeptide is HTH-type transcriptional repressor FabR (Escherichia coli (strain K12 / MC4100 / BW2952)).